The chain runs to 686 residues: DNA ligase 1 (686 aa).

NAD(+) is bound by residues aspartate 35–aspartate 39, serine 84–leucine 85, and glutamate 119. The N6-AMP-lysine intermediate role is filled by lysine 121. Residues arginine 142, glutamate 177, lysine 293, and lysine 317 each coordinate NAD(+). Cysteine 411, cysteine 414, cysteine 429, and cysteine 434 together coordinate Zn(2+). In terms of domain architecture, BRCT spans arginine 602–proline 686.

The protein belongs to the NAD-dependent DNA ligase family. LigA subfamily. Mg(2+) serves as cofactor. The cofactor is Mn(2+).

The catalysed reaction is NAD(+) + (deoxyribonucleotide)n-3'-hydroxyl + 5'-phospho-(deoxyribonucleotide)m = (deoxyribonucleotide)n+m + AMP + beta-nicotinamide D-nucleotide.. DNA ligase that catalyzes the formation of phosphodiester linkages between 5'-phosphoryl and 3'-hydroxyl groups in double-stranded DNA using NAD as a coenzyme and as the energy source for the reaction. It is essential for DNA replication and repair of damaged DNA. This is DNA ligase 1 from Deinococcus deserti (strain DSM 17065 / CIP 109153 / LMG 22923 / VCD115).